The chain runs to 496 residues: Probable CtpA-like serine protease (496 aa).

The span at 1–16 shows a compositional bias: basic and acidic residues; sequence MDDKQHTSSSDDERAE. A disordered region spans residues 1 to 27; that stretch reads MDDKQHTSSSDDERAEIATSNQDQETN. Polar residues predominate over residues 18–27; that stretch reads ATSNQDQETN. The chain crosses the membrane as a helical span at residues 39 to 59; the sequence is FISILIGTTLITAVITVVAYI. The region spanning 124–206 is the PDZ domain; that stretch reads TKSFNEGVSG…TEVTLTVQRG (83 aa). Catalysis depends on charge relay system residues Ser-329, Asp-340, and Lys-354.

This sequence belongs to the peptidase S41A family.

It is found in the cell membrane. This is Probable CtpA-like serine protease from Staphylococcus aureus (strain Mu50 / ATCC 700699).